A 411-amino-acid polypeptide reads, in one-letter code: Lissencephaly-1 homolog (411 aa).

In terms of domain architecture, LisH spans Gln-9–Gly-41. Residues Thr-56–Ala-83 are a coiled coil. WD repeat units follow at residues Gly-106–Lys-147, His-149–Lys-187, Gly-191–Thr-230, Gly-233–Glu-272, Ala-275–Val-334, Gly-337–Thr-376, and Ala-379–Arg-411.

Belongs to the WD repeat LIS1/nudF family.

Its subcellular location is the cytoplasm. It localises to the cytoskeleton. It is found in the microtubule organizing center. The protein localises to the centrosome. Its function is as follows. Positively regulates the activity of the minus-end directed microtubule motor protein dynein. May enhance dynein-mediated microtubule sliding by targeting dynein to the microtubule plus end. Required for several dynein- and microtubule-dependent processes. This is Lissencephaly-1 homolog from Glossina morsitans morsitans (Savannah tsetse fly).